A 396-amino-acid polypeptide reads, in one-letter code: Initiation-specific alpha-1,6-mannosyltransferase (396 aa).

The Cytoplasmic segment spans residues 1 to 7 (MLRLRLR). Residues 8 to 28 (SIVIGAAIAGSILLLFNHGSI) form a helical; Signal-anchor for type II membrane protein membrane-spanning segment. At 29-396 (EGMEDLTEIS…HFFAGSWKDD (368 aa)) the chain is on the lumenal side. A DXD motif motif is present at residues 229 to 231 (DID). Residue N345 is glycosylated (N-linked (GlcNAc...) asparagine).

It belongs to the glycosyltransferase 32 family. Mn(2+) is required as a cofactor.

The protein resides in the endoplasmic reticulum membrane. Its subcellular location is the golgi apparatus membrane. The enzyme catalyses Transfers an alpha-D-mannosyl residue from GDP-mannose into lipid-linked oligosaccharide, forming an alpha-(1-&gt;6)-D-mannosyl-D-mannose linkage.. Its function is as follows. Mannosyltransferase involved in outer chain elongation of asparagine-linked oligosaccharides of the type Man(9)GlcNAc(2). May otherwise add the first alpha-1,6-mannose to the Man(8)GlcNAc(2) core oligosaccharide from the ER. Represents the first enzymatic event required for synthesis of outer chain mannose linkages on yeast secretory proteins. This chain is Initiation-specific alpha-1,6-mannosyltransferase, found in Schizosaccharomyces pombe (strain 972 / ATCC 24843) (Fission yeast).